Reading from the N-terminus, the 971-residue chain is U2 snRNP component HSH155 (971 aa).

Disordered stretches follow at residues 1-22 (MSHP…LGGQ) and 54-118 (TRTV…AVKE). Positions 8 to 22 (VNANNSDKSHQLGGQ) are enriched in polar residues. Positions 54–75 (TRTVQNREDSYHKRRFDMKFEP) are enriched in basic and acidic residues. Over residues 78–90 (DTQTVTSSENTQD) the composition is skewed to polar residues. 9 HEAT repeats span residues 199–237 (MIFN…DLTK), 273–310 (AGLK…ALGV), 350–387 (NHLT…NSYP), 513–550 (LGCS…LLGT), 596–633 (PFLA…VIKN), 680–717 (PPIN…LAPT), 722–759 (KEWM…AIGP), 792–829 (CGPY…YIGN), and 832–870 (KDYI…NCSG).

It belongs to the SF3B1 family. Belongs to the CWC complex (or CEF1-associated complex), a spliceosome sub-complex reminiscent of a late-stage spliceosome composed of the U2, U5 and U6 snRNAs and at least BUD13, BUD31, BRR2, CDC40, CEF1, CLF1, CUS1, CWC2, CWC15, CWC21, CWC22, CWC23, CWC24, CWC25, CWC27, ECM2, HSH155, IST3, ISY1, LEA1, MSL1, NTC20, PRP8, PRP9, PRP11, PRP19, PRP21, PRP22, PRP45, PRP46, SLU7, SMB1, SMD1, SMD2, SMD3, SMX2, SMX3, SNT309, SNU114, SPP2, SYF1, SYF2, RSE1 and YJU2. Interacts with RDS3.

Its subcellular location is the nucleus. Contacts pre-mRNA on both sides of the branch site early in spliceosome assembly. In Saccharomyces cerevisiae (strain ATCC 204508 / S288c) (Baker's yeast), this protein is U2 snRNP component HSH155 (HSH155).